We begin with the raw amino-acid sequence, 199 residues long: Carbon disulfide hydrolase (199 aa).

Zn(2+) is bound by residues C36, H91, and C94.

It belongs to the beta-class carbonic anhydrase family. In terms of assembly, exists as both octamers and hexadecamers in solution. The hexadecameric homooligomer may form a catenane, through interactions of two interlocked octameric rings. It depends on Zn(2+) as a cofactor.

It catalyses the reaction carbon disulfide + 2 H2O = 2 hydrogen sulfide + CO2 + 2 H(+). The protein operates within sulfur metabolism; hydrogen sulfide biosynthesis. Its function is as follows. Catalyzes the conversion of carbon disulfide into hydrogen sulfide and carbon dioxide, with carbonyl sulfide as an intermediate. Likely plays a key role in sulfur metabolism that allows A.thiooxidans G8 to grow on carbon disulfide as the main carbon and energy source. Does not show carbonic anhydrase activity (hydration of CO(2) to carbonate). In Acidithiobacillus thiooxidans (Thiobacillus thiooxidans), this protein is Carbon disulfide hydrolase.